Consider the following 166-residue polypeptide: MTSKSPKFRIGNGYDIHRLEIGRKLIIGGVKLNHPDNLGLDGHSDADVLSHSIMDALLGALSLGDIGKYFPPSDEKWKDVDSLILLSKVIDLVRKQGWEINNIDSVIVAERPKIKPYVEIMKRNLSKTLKIDDSFIGIKATTNEKLGPEGREEGISCHSVVLLEKK.

Positions 15 and 17 each coordinate a divalent metal cation. Residues 15–17 (DIH) and 43–44 (HS) contribute to the 4-CDP-2-C-methyl-D-erythritol 2-phosphate site. H51 is a binding site for a divalent metal cation. Residues 65–67 (DIG), 141–144 (TTNE), and R151 contribute to the 4-CDP-2-C-methyl-D-erythritol 2-phosphate site.

This sequence belongs to the IspF family. As to quaternary structure, homotrimer. A divalent metal cation is required as a cofactor.

The enzyme catalyses 4-CDP-2-C-methyl-D-erythritol 2-phosphate = 2-C-methyl-D-erythritol 2,4-cyclic diphosphate + CMP. It functions in the pathway isoprenoid biosynthesis; isopentenyl diphosphate biosynthesis via DXP pathway; isopentenyl diphosphate from 1-deoxy-D-xylulose 5-phosphate: step 4/6. Involved in the biosynthesis of isopentenyl diphosphate (IPP) and dimethylallyl diphosphate (DMAPP), two major building blocks of isoprenoid compounds. Catalyzes the conversion of 4-diphosphocytidyl-2-C-methyl-D-erythritol 2-phosphate (CDP-ME2P) to 2-C-methyl-D-erythritol 2,4-cyclodiphosphate (ME-CPP) with a corresponding release of cytidine 5-monophosphate (CMP). This Prochlorococcus marinus (strain MIT 9215) protein is 2-C-methyl-D-erythritol 2,4-cyclodiphosphate synthase.